Consider the following 37-residue polypeptide: Large ribosomal subunit protein bL36c (37 aa).

This sequence belongs to the bacterial ribosomal protein bL36 family.

The protein resides in the plastid. It is found in the chloroplast. The chain is Large ribosomal subunit protein bL36c from Dioscorea elephantipes (Elephant's foot yam).